The primary structure comprises 342 residues: Dihydroorotate dehydrogenase (quinone) (342 aa).

FMN-binding positions include 60 to 64 (AGFDK) and Thr-84. A substrate-binding site is contributed by Lys-64. 109-113 (NRMGF) is a binding site for substrate. Residues Asn-137 and Asn-170 each contribute to the FMN site. Asn-170 is a substrate binding site. The active-site Nucleophile is Ser-173. Position 175 (Asn-175) interacts with substrate. Residues Lys-215 and Thr-243 each contribute to the FMN site. Residue 244–245 (NT) participates in substrate binding. FMN is bound by residues Gly-266, Gly-295, and 316-317 (YT).

This sequence belongs to the dihydroorotate dehydrogenase family. Type 2 subfamily. As to quaternary structure, monomer. FMN is required as a cofactor.

The protein localises to the cell membrane. The enzyme catalyses (S)-dihydroorotate + a quinone = orotate + a quinol. Its pathway is pyrimidine metabolism; UMP biosynthesis via de novo pathway; orotate from (S)-dihydroorotate (quinone route): step 1/1. Its function is as follows. Catalyzes the conversion of dihydroorotate to orotate with quinone as electron acceptor. The protein is Dihydroorotate dehydrogenase (quinone) of Halorhodospira halophila (strain DSM 244 / SL1) (Ectothiorhodospira halophila (strain DSM 244 / SL1)).